Consider the following 450-residue polypeptide: Phosphoglucosamine mutase (450 aa).

S101 functions as the Phosphoserine intermediate in the catalytic mechanism. Mg(2+) contacts are provided by S101, D240, D242, and D244. Phosphoserine is present on S101.

Belongs to the phosphohexose mutase family. It depends on Mg(2+) as a cofactor. In terms of processing, activated by phosphorylation.

It catalyses the reaction alpha-D-glucosamine 1-phosphate = D-glucosamine 6-phosphate. Functionally, catalyzes the conversion of glucosamine-6-phosphate to glucosamine-1-phosphate. The protein is Phosphoglucosamine mutase of Streptococcus pneumoniae (strain Hungary19A-6).